The following is a 720-amino-acid chain: Nucleoporin 88 (720 aa).

The stretch at 584-611 (LALCREDRKSLTEAAERLADKYEDAKYR) forms a coiled coil.

Widely expressed. Higher levels of expression are detected in highly proliferative frontal regions of the embryo, e.g. brain, eye and anterior trunk.

The protein localises to the nucleus. It localises to the nuclear pore complex. Component of the nuclear pore complex. In Danio rerio (Zebrafish), this protein is Nucleoporin 88.